The sequence spans 310 residues: Aspartate carbamoyltransferase catalytic subunit (310 aa).

Carbamoyl phosphate is bound by residues R58 and T59. K86 lines the L-aspartate pocket. Carbamoyl phosphate is bound by residues R108, H136, and Q139. Residues R169 and R224 each coordinate L-aspartate. Residues G265 and P266 each coordinate carbamoyl phosphate.

Belongs to the aspartate/ornithine carbamoyltransferase superfamily. ATCase family. Heterododecamer (2C3:3R2) of six catalytic PyrB chains organized as two trimers (C3), and six regulatory PyrI chains organized as three dimers (R2).

The enzyme catalyses carbamoyl phosphate + L-aspartate = N-carbamoyl-L-aspartate + phosphate + H(+). It participates in pyrimidine metabolism; UMP biosynthesis via de novo pathway; (S)-dihydroorotate from bicarbonate: step 2/3. In terms of biological role, catalyzes the condensation of carbamoyl phosphate and aspartate to form carbamoyl aspartate and inorganic phosphate, the committed step in the de novo pyrimidine nucleotide biosynthesis pathway. This is Aspartate carbamoyltransferase catalytic subunit from Citrifermentans bemidjiense (strain ATCC BAA-1014 / DSM 16622 / JCM 12645 / Bem) (Geobacter bemidjiensis).